The primary structure comprises 342 residues: Antihemorrhagic factor cHLP-B (342 aa).

A signal peptide spans 1-19; sequence MNSLVALVLLGQMIGSTLS. 2 Cystatin fetuin-A-type domains span residues 20-129 and 140-253; these read HHLQ…AKCH and RNCP…SDCV. Cystine bridges form between cysteine 28–cysteine 333, cysteine 85–cysteine 96, cysteine 110–cysteine 128, cysteine 142–cysteine 145, cysteine 204–cysteine 216, and cysteine 229–cysteine 252. Asparagine 95 is a glycosylation site (N-linked (GlcNAc...) asparagine). An N-linked (GlcNAc...) asparagine glycan is attached at asparagine 203. Residues asparagine 281 and asparagine 292 are each glycosylated (N-linked (GlcNAc...) asparagine).

Belongs to the fetuin family. Homodimer. Expressed by the liver.

Its subcellular location is the secreted. Its function is as follows. Potent inhibitor of hemorrhagic activity but also proteolytic activities. Inhibition occurs by formation of a non-covalent complex between this protein and the proteinases at their metalloproteinase domains. The polypeptide is Antihemorrhagic factor cHLP-B (Gloydius brevicauda (Korean slamosa snake)).